A 110-amino-acid chain; its full sequence is Light-harvesting complex-like protein OHP1, chloroplastic (110 aa).

The N-terminal 41 residues, Met-1 to Ala-41, are a transit peptide targeting the chloroplast. The Stromal portion of the chain corresponds to Ala-42–Arg-74. A helical membrane pass occupies residues Ala-75–Leu-95. The Lumenal portion of the chain corresponds to Glu-96–Leu-110.

Belongs to the ELIP/psbS family. May bind chlorophyll and form dimers in the thylakoid membrane. Component of a high molecular weight complex containing OHP1, OHP2 and HCF244, and PSII core proteins D1/D2, HCF136 and HCF173. Interacts with HCF244. Forms a trimeric complex with OHP2 and HCF244 that mutually stabilizes each subunit. Mostly expressed in cotyledons and shoot apices.

It localises to the plastid. The protein resides in the chloroplast thylakoid membrane. Its function is as follows. May play a photoprotective role in the thylakoid membrane in response to light stress. Involved in photosystems I (PSI) and II (PSII) core proteins function. Forms a trimeric complex with OHP2 and HCF244 that is required to promote PSII core subunit assembly. The trimeric complex forms a transient PSII reaction center-like complex with PsbA, PsbD, PsbE, PsbF and PsbI subunits in thylakoids for early assembly of PSII as well as PSII repair. The trimeric complex is required for the recruitment of ribosomes to the psbA mRNA during PSII biogenesis and repair. Forms a heterodimer with OHP1 that binds chlorophylls and carotenoids, and that may function in the delivery of pigments to the PsbA subunit of PSII. In Arabidopsis thaliana (Mouse-ear cress), this protein is Light-harvesting complex-like protein OHP1, chloroplastic.